The sequence spans 600 residues: Aspartate--tRNA(Asp/Asn) ligase (600 aa).

An L-aspartate-binding site is contributed by Glu-176. Residues 200–203 are aspartate; it reads QQFK. L-aspartate contacts are provided by Arg-222 and His-452. 222-224 contributes to the ATP binding site; the sequence is RDE. An ATP-binding site is contributed by Glu-490. Position 497 (Arg-497) interacts with L-aspartate. Residue 542 to 545 coordinates ATP; the sequence is GIDR.

This sequence belongs to the class-II aminoacyl-tRNA synthetase family. Type 1 subfamily. As to quaternary structure, homodimer.

The protein localises to the cytoplasm. It carries out the reaction tRNA(Asx) + L-aspartate + ATP = L-aspartyl-tRNA(Asx) + AMP + diphosphate. Functionally, aspartyl-tRNA synthetase with relaxed tRNA specificity since it is able to aspartylate not only its cognate tRNA(Asp) but also tRNA(Asn). Reaction proceeds in two steps: L-aspartate is first activated by ATP to form Asp-AMP and then transferred to the acceptor end of tRNA(Asp/Asn). In Rickettsia felis (strain ATCC VR-1525 / URRWXCal2) (Rickettsia azadi), this protein is Aspartate--tRNA(Asp/Asn) ligase.